The following is a 372-amino-acid chain: MTTAPPPLSVLLELTHRCPLACPYCSNPIALAALREEMDTAGWRSLLEQAAEMGVLQAHFSGGEPMLRKDLPELVAHARTLGLYSNLITSGVAGGEPMLDQLQAAGLEHVQLSVQDVDPAGADRIAGYRNSLPKKRDFAAAVRARGLPLTINAVLHRHNAERVPGMIALALEWQAERIEVAHTQYYGWGLRNRAALMPSREQLMATIDAVDTARRELGDSLAIDFVTPDYYARQPKPCMGGWGQRFVNISPRGDVLPCHAAETIEGMRFDNLRERALADIWNNGEAFVRFRGTAWMPEVCQGCPKREIDWGGCRCQALALSGNAATLDPVCERSPAHAQVRATAEREAAAPAPEFIYRRPERPAPATADTLE.

Positions 4-219 (APPPLSVLLE…VDTARRELGD (216 aa)) constitute a Radical SAM core domain. [4Fe-4S] cluster contacts are provided by Cys-18, Cys-22, and Cys-25. The disordered stretch occupies residues 342 to 372 (ATAEREAAAPAPEFIYRRPERPAPATADTLE).

It belongs to the radical SAM superfamily. PqqE family. As to quaternary structure, interacts with PqqD. The interaction is necessary for activity of PqqE. It depends on [4Fe-4S] cluster as a cofactor.

The enzyme catalyses [PQQ precursor protein] + S-adenosyl-L-methionine = E-Y cross-linked-[PQQ precursor protein] + 5'-deoxyadenosine + L-methionine + H(+). It participates in cofactor biosynthesis; pyrroloquinoline quinone biosynthesis. Functionally, catalyzes the cross-linking of a glutamate residue and a tyrosine residue in the PqqA protein as part of the biosynthesis of pyrroloquinoline quinone (PQQ). The protein is PqqA peptide cyclase of Xanthomonas oryzae pv. oryzae (strain MAFF 311018).